The sequence spans 326 residues: PDZ domain-containing protein MAGIX (326 aa).

The interval 1–32 (MDSHAGNTADPRGSRRGVGLQGSGSPRARQLL) is disordered. The PDZ domain maps to 128–212 (SVELVRGPAG…RLCLVLQRPQ (85 aa)). Residues 214–267 (MNGSRSKEVGGGHQKTDRIPDPRGGRMMESRGTISPVHHRPKTRTGPGPSPESV) are disordered. Over residues 218–242 (RSKEVGGGHQKTDRIPDPRGGRMME) the composition is skewed to basic and acidic residues. Phosphoserine is present on Ser-263.

The chain is PDZ domain-containing protein MAGIX (Magix) from Rattus norvegicus (Rat).